The following is a 193-amino-acid chain: Ganglioside GM2 activator (193 aa).

The first 20 residues, 1-20 (MHRLPLLLLLGLLLAGSVAP), serve as a signal peptide directing secretion. 4 disulfide bridges follow: Cys-39–Cys-183, Cys-99–Cys-106, Cys-112–Cys-138, and Cys-125–Cys-136. Asn-151 carries an N-linked (GlcNAc...) asparagine glycan.

Widely expressed. Most abundant in kidney and testis.

The protein resides in the lysosome. It catalyses the reaction cholesterol(in) = cholesterol(out). Binds gangliosides and stimulates ganglioside GM2 degradation. It stimulates only the breakdown of ganglioside GM2 and glycolipid GA2 by beta-hexosaminidase A. It extracts single GM2 molecules from membranes and presents them in soluble form to beta-hexosaminidase A for cleavage of N-acetyl-D-galactosamine and conversion to GM3. The large binding pocket can accommodate several single chain phospholipids and fatty acids, GM2A also exhibits some calcium-independent phospholipase activity. Has cholesterol transfer activity. In Mus musculus (Mouse), this protein is Ganglioside GM2 activator.